We begin with the raw amino-acid sequence, 919 residues long: Exostosin-like 3 (919 aa).

Topologically, residues 1-30 (MTGYTMLRNGGAGNGGQTCMLRWSNRIRLT) are cytoplasmic. Residues 1–140 (MTGYTMLRNG…LKNVISQTEH (140 aa)) form a required for interaction with REG3A region. Residues 31 to 51 (WLSFTLFVILVFFPLIAHYYL) form a helical; Signal-anchor for type II membrane protein membrane-spanning segment. The Lumenal portion of the chain corresponds to 52–919 (TTLDEADEAG…HDKTKCFKFI (868 aa)). 2 disulfides stabilise this stretch: Cys177/Cys182 and Cys188/Cys236. Asn290 carries an N-linked (GlcNAc...) asparagine glycan. Ser362 carries the post-translational modification Phosphoserine. Cys400 and Cys415 are disulfide-bonded. A glycan (N-linked (GlcNAc...) asparagine) is linked at Asn592. Positions 668, 672, 697, 723, 728, 744, 745, and 746 each coordinate UDP-N-acetyl-alpha-D-glucosamine. Asp746 lines the Mn(2+) pocket. Asn790 carries an N-linked (GlcNAc...) asparagine glycan. Cys831 and Cys879 form a disulfide bridge. The UDP-N-acetyl-alpha-D-glucosamine site is built by Glu832, Asp833, and Arg876. Residue Asp833 is part of the active site.

Belongs to the glycosyltransferase 47 family. Homodimer; disulfide-linked. Interacts with REG3A. Mn(2+) is required as a cofactor. As to expression, ubiquitous. Expressed in keratinocytes. Expressed in pancreas.

Its subcellular location is the endoplasmic reticulum membrane. It is found in the golgi apparatus. The protein resides in the cell membrane. It localises to the nucleus. The catalysed reaction is 3-O-(beta-D-GlcA-(1-&gt;3)-beta-D-Gal-(1-&gt;3)-beta-D-Gal-(1-&gt;4)-beta-D-Xyl)-L-seryl-[protein] + UDP-N-acetyl-alpha-D-glucosamine = 3-O-(alpha-D-GlcNAc-(1-&gt;4)-beta-D-GlcA-(1-&gt;3)-beta-D-Gal-(1-&gt;3)-beta-D-Gal-(1-&gt;4)-beta-D-Xyl)-L-seryl-[protein] + UDP + H(+). Its pathway is glycan metabolism; heparan sulfate biosynthesis. Its function is as follows. Glycosyltransferase which regulates the biosynthesis of heparan sulfate (HS). Initiates HS synthesis by transferring the first N-acetyl-alpha-D-glucosamine (alpha-GlcNAc) residue (GlcNAcT-I activity) to the tetrasaccharide linker (GlcA-Gal-Gal-Xyl-)Ser core linker. May also transfer alpha-GlcNAc residues during HS elongation (GlcNAcT-II activity). Lacks glucuronyl transferase II (GlcAT-II) activity. Important for both skeletal development and hematopoiesis, through the formation of HS proteoglycans (HSPGs). Through the synthesis of HS, regulates postnatal pancreatic islet maturation and insulin secretion. In terms of biological role, receptor for REG3A, REG3B and REG3G, induces the activation of downstream signaling pathways such as PI3K-AKT or RAS-RAF-MEK-ERK signaling pathway. Required for the function of REG3A in regulating keratinocyte proliferation and differentiation. Required for the inhibition of skin inflammation mediated by REG3A through the activation of PI3K-AKT-STAT3 pathway. Required for the function of REG3A and REG3G in glucose tolerance in pancreas. Expressed in microglia, is activated by nociceptor-derived REG3G in response to endotoxins, leading to the inhibition of kynurenine pathway to prevent endotoxic death. The sequence is that of Exostosin-like 3 from Homo sapiens (Human).